The chain runs to 535 residues: Xylan 1,3-beta-xylosidase (535 aa).

D16 (proton acceptor) is an active-site residue. E189 functions as the Proton donor in the catalytic mechanism.

Belongs to the glycosyl hydrolase 43 family.

It carries out the reaction Hydrolysis of successive xylose residues from the non-reducing termini of (1-&gt;3)-beta-D-xylans.. Its activity is regulated as follows. Inhibited by Ag(+), Cu(2+), Hg(2+), Mn(2+), Pb(2+), Zn(2+) and p-chloromercuric benzoic acid. In terms of biological role, beta-1,3-xylosidase that hydrolyzes beta-1,3-xylooligosaccharides to D-xylose. This Vibrio sp protein is Xylan 1,3-beta-xylosidase (xloA).